A 209-amino-acid chain; its full sequence is Probable chalcone--flavanone isomerase 3 (209 aa).

It belongs to the chalcone isomerase family.

The enzyme catalyses a chalcone = a flavanone.. It participates in secondary metabolite biosynthesis; flavonoid biosynthesis. Involved in anthocyanin biosynthesis. This chain is Probable chalcone--flavanone isomerase 3 (CHI3), found in Arabidopsis thaliana (Mouse-ear cress).